The following is a 280-amino-acid chain: Protein YibA (280 aa).

This is Protein YibA (yibA) from Escherichia coli O157:H7.